Here is a 230-residue protein sequence, read N- to C-terminus: PKHD-type hydroxylase XF_0598 (230 aa).

Positions 78 to 182 constitute a Fe2OG dioxygenase domain; it reads RTLPPRFNCY…RIASFFWVQS (105 aa). Fe cation is bound by residues His-96, Asp-98, and His-163. Arg-173 serves as a coordination point for 2-oxoglutarate.

The cofactor is Fe(2+). It depends on L-ascorbate as a cofactor.

The sequence is that of PKHD-type hydroxylase XF_0598 from Xylella fastidiosa (strain 9a5c).